Reading from the N-terminus, the 160-residue chain is uncharacterized protein (160 aa).

An N-acetyltransferase domain is found at 9 to 151 (LLINYKTLEK…GENPLIWLPE (143 aa)).

This is an uncharacterized protein from Oceanobacillus iheyensis (strain DSM 14371 / CIP 107618 / JCM 11309 / KCTC 3954 / HTE831).